A 253-amino-acid polypeptide reads, in one-letter code: UPF0280 protein Mbar_A3697 (253 aa).

The protein belongs to the UPF0280 family.

The chain is UPF0280 protein Mbar_A3697 from Methanosarcina barkeri (strain Fusaro / DSM 804).